Here is a 490-residue protein sequence, read N- to C-terminus: Protein dead ringer homolog (490 aa).

The span at 1 to 33 (MVEDQRRQLMEEEDEERRLILEEQRRRMMRADR) shows a compositional bias: basic and acidic residues. 2 disordered regions span residues 1-77 (MVED…AHID) and 106-135 (ITQS…HGGS). The span at 34 to 50 (DEEEEEEEEEEEEEREE) shows a compositional bias: acidic residues. Basic and acidic residues predominate over residues 51-76 (DDGRRSEDEMREDEPPGRRETSHAHI). Residues 106–117 (ITQSPPLTNGSN) are compositionally biased toward polar residues. The region spanning 202–294 (DSKRKEFLDD…YLYPYECEKK (93 aa)) is the ARID domain. Residues 298–369 (SPSELQSAID…PPRLSPSTSP (72 aa)) form a disordered region. Positions 316–325 (PSYHSPHMHP) are enriched in basic residues. In terms of domain architecture, REKLES spans 389–479 (AAMLAELAER…GVLYPRGGTR (91 aa)).

It is found in the nucleus. Its function is as follows. Transcription factor involved in skeletogenesis and oral ectoderm patterning. The polypeptide is Protein dead ringer homolog (dri) (Strongylocentrotus purpuratus (Purple sea urchin)).